A 251-amino-acid chain; its full sequence is V-set and transmembrane domain-containing protein 2B (251 aa).

Residues 1 to 25 form the signal peptide; it reads MEKQGLFSALCYLMLNTPLLFSVNA. The Ig-like V-type domain maps to 26-142; sequence TFTEVPKDVT…DETQEHKAQA (117 aa). Topologically, residues 26 to 226 are extracellular; the sequence is TFTEVPKDVT…RQQHGSGTGP (201 aa). Cysteine 46 and cysteine 125 are joined by a disulfide. The tract at residues 157-213 is disordered; sequence AAEAVSHIQSSGPRRNNPSSRATPEPGNKRAVPPAENLAPSLSTAASSSASPAPGKA. 2 stretches are compositionally biased toward low complexity: residues 166–177 and 195–213; these read SSGPRRNNPSSR and APSL…PGKA. The chain crosses the membrane as a helical span at residues 227-247; it reads IFANDPALYMFLLIFHQLVYL. The Cytoplasmic segment spans residues 248–251; sequence LLNH.

It is found in the membrane. The chain is V-set and transmembrane domain-containing protein 2B (vstm2b) from Xenopus tropicalis (Western clawed frog).